The chain runs to 493 residues: Cysteine sulfinic acid decarboxylase (493 aa).

K305 is modified (N6-(pyridoxal phosphate)lysine).

This sequence belongs to the group II decarboxylase family. In terms of assembly, homodimer. It depends on pyridoxal 5'-phosphate as a cofactor. As to expression, expressed in brain, liver and kidney.

The catalysed reaction is L-aspartate + H(+) = beta-alanine + CO2. The enzyme catalyses 3-sulfino-L-alanine + H(+) = hypotaurine + CO2. It catalyses the reaction L-cysteate + H(+) = taurine + CO2. Its pathway is organosulfur biosynthesis; taurine biosynthesis; hypotaurine from L-cysteine: step 2/2. In terms of biological role, catalyzes the decarboxylation of L-aspartate, 3-sulfino-L-alanine (cysteine sulfinic acid), and L-cysteate to beta-alanine, hypotaurine and taurine, respectively. The preferred substrate is 3-sulfino-L-alanine. Does not exhibit any decarboxylation activity toward glutamate. The sequence is that of Cysteine sulfinic acid decarboxylase (Csad) from Rattus norvegicus (Rat).